A 206-amino-acid polypeptide reads, in one-letter code: Small ribosomal subunit protein uS4 (206 aa).

Positions 96–158 (SRLDNVVYRM…AKGQLRIKGA (63 aa)) constitute an S4 RNA-binding domain.

The protein belongs to the universal ribosomal protein uS4 family. As to quaternary structure, part of the 30S ribosomal subunit. Contacts protein S5. The interaction surface between S4 and S5 is involved in control of translational fidelity.

In terms of biological role, one of the primary rRNA binding proteins, it binds directly to 16S rRNA where it nucleates assembly of the body of the 30S subunit. Its function is as follows. With S5 and S12 plays an important role in translational accuracy. The polypeptide is Small ribosomal subunit protein uS4 (Coxiella burnetii (strain CbuG_Q212) (Coxiella burnetii (strain Q212))).